A 496-amino-acid chain; its full sequence is Aminoacetaldehyde dehydrogenase (496 aa).

The NADH site is built by leucine 166, tryptophan 168, lysine 192, serine 246, threonine 249, and tyrosine 256. Glutamate 268 (proton acceptor) is an active-site residue. Cysteine 269 serves as a coordination point for NADH. Cysteine 303 functions as the Nucleophile in the catalytic mechanism. 2 residues coordinate NADH: lysine 353 and glutamate 398.

The protein belongs to the aldehyde dehydrogenase family. Homotetramer, formed by two symmetrical dimers.

The enzyme catalyses aminoacetaldehyde + NAD(+) + H2O = glycine + NADH + 2 H(+). It catalyses the reaction 3-aminopropanal + NAD(+) + H2O = beta-alanine + NADH + 2 H(+). In terms of biological role, NAD(+)-dependent aminoaldehyde dehydrogenase highly efficient with protonated aminoacetaldehyde (ACTAL) and 3-aminopropanaldehyde (APAL). Likely participates in a still uncharacterized metabolic pathway present in proteobacteria species, in which ACTAL might be an intermediate, yielding glycine. Highly prefers NAD(+) over NADP(+). Shows very poor activity with acetaldehyde, propanaldehyde, butanaldehyde, pentanaldehyde, dimethylaminoacetaldehyde, trimethylaminoacetaldehyde (betaine aldehyde), trimethylaminobutanaldehyde, short aliphatic hydroxyaldehydes such as 3-hydroxypropanaldehyde and 2-hydroxypropanaldehyde (lactaldehyde), and aromatic aldehydes. The polypeptide is Aminoacetaldehyde dehydrogenase (Pseudomonas aeruginosa (strain ATCC 15692 / DSM 22644 / CIP 104116 / JCM 14847 / LMG 12228 / 1C / PRS 101 / PAO1)).